We begin with the raw amino-acid sequence, 274 residues long: Formamidopyrimidine-DNA glycosylase (274 aa).

The active-site Schiff-base intermediate with DNA is proline 2. The active-site Proton donor is the glutamate 3. Catalysis depends on lysine 58, which acts as the Proton donor; for beta-elimination activity. Residues histidine 91 and arginine 110 each coordinate DNA. Residues 238-272 (QVYDKTGQECVRCGTIIEKIQLGGRGTHFCPNCQR) form an FPG-type zinc finger. Catalysis depends on arginine 262, which acts as the Proton donor; for delta-elimination activity.

It belongs to the FPG family. As to quaternary structure, monomer. Zn(2+) serves as cofactor.

It catalyses the reaction Hydrolysis of DNA containing ring-opened 7-methylguanine residues, releasing 2,6-diamino-4-hydroxy-5-(N-methyl)formamidopyrimidine.. It carries out the reaction 2'-deoxyribonucleotide-(2'-deoxyribose 5'-phosphate)-2'-deoxyribonucleotide-DNA = a 3'-end 2'-deoxyribonucleotide-(2,3-dehydro-2,3-deoxyribose 5'-phosphate)-DNA + a 5'-end 5'-phospho-2'-deoxyribonucleoside-DNA + H(+). Functionally, involved in base excision repair of DNA damaged by oxidation or by mutagenic agents. Acts as a DNA glycosylase that recognizes and removes damaged bases. Has a preference for oxidized purines, such as 7,8-dihydro-8-oxoguanine (8-oxoG). Has AP (apurinic/apyrimidinic) lyase activity and introduces nicks in the DNA strand. Cleaves the DNA backbone by beta-delta elimination to generate a single-strand break at the site of the removed base with both 3'- and 5'-phosphates. This chain is Formamidopyrimidine-DNA glycosylase, found in Streptococcus pneumoniae serotype 4 (strain ATCC BAA-334 / TIGR4).